Consider the following 45-residue polypeptide: Thymosin beta-15A homolog (45 aa).

Residues 19 to 45 (KKTNTEEKNTLPSKETIEQEKECVKSS) form a disordered region. Residues 21–45 (TNTEEKNTLPSKETIEQEKECVKSS) show a composition bias toward basic and acidic residues.

Belongs to the thymosin beta family.

It localises to the cytoplasm. The protein resides in the cytoskeleton. In terms of biological role, plays an important role in the organization of the cytoskeleton. Binds to and sequesters actin monomers (G actin) and therefore inhibits actin polymerization. The polypeptide is Thymosin beta-15A homolog (Coturnix japonica (Japanese quail)).